The primary structure comprises 263 residues: 3-deoxy-manno-octulosonate cytidylyltransferase (263 aa).

This sequence belongs to the KdsB family.

Its subcellular location is the cytoplasm. The catalysed reaction is 3-deoxy-alpha-D-manno-oct-2-ulosonate + CTP = CMP-3-deoxy-beta-D-manno-octulosonate + diphosphate. The protein operates within nucleotide-sugar biosynthesis; CMP-3-deoxy-D-manno-octulosonate biosynthesis; CMP-3-deoxy-D-manno-octulosonate from 3-deoxy-D-manno-octulosonate and CTP: step 1/1. Its pathway is bacterial outer membrane biogenesis; lipopolysaccharide biosynthesis. Its function is as follows. Activates KDO (a required 8-carbon sugar) for incorporation into bacterial lipopolysaccharide in Gram-negative bacteria. The sequence is that of 3-deoxy-manno-octulosonate cytidylyltransferase from Burkholderia mallei (strain NCTC 10229).